We begin with the raw amino-acid sequence, 1122 residues long: MQEATEPPPPKRKNKGTVVAPKGHGTLQAIDISTNGPVEIKYHLNLPHALEKIMQVNLLTLPTNLTPQRLRTLDSSGLRALVLELRPCRAEVWTCLPRGLVSMTTIETEDGHADADNIVEREVQAPSLNFPLKFLVKGSQVQLIHEVHPVNRCEYCGRLYKHKHECSARRREFYFHHINSHSSNWWQEIQFFPIGSHPRTERLFLTYDVETYTWMGSFGKQLIPFMLVMKLSGDQRLVNIAYDIAMKLKWDRWRQDPQTFYCITPEKMAVGQHFRQYRDQLQTALAVDLWSSFLKANPHMHEWALEHYALTDPTDLTFEELKKLPHVRGTPRFLELYIVGHNINGFDEIVLAAQVINNRAEVPQPFKITRNFMPRAGEILFNDVTFALPNPAYKKRADFQLWEQGACDDIDFKYQFLKVMVRDTFALTHTSLRNAAQAYSLPVEKGCCPYKAVNQFYMLGSYRAEKDGFPLEEYWKDHEEYLLNRELWEKKSQPRYDIIQETLNYCALDVLVTAELVAKLQESYAHFIRDSVGLPHVHFNIFQRPTISSNSHAIFRQIVYRAEKPNRTNLGPGLLAPSHELYDYVRASIRGGRCYPTYIGILEEPLYVYDICGMYASALTHPMPWGTPLNPYERALAVREWQMTLDDPATISYFDKDLLPGIFTIDADPPDEFMLDPLPPFCSRKGGRLCWTNEPLRGEVATTVDLITLHNRGWRVRIVPDELTTIFPEWKCVAREYVQLNIAAKERADKEKNQTMRSIAKLLSNALYGSFATKLDNKKIVFSDQMDESLIKGISAGTVNIKSSSFLETDNLSAEVMPAFEREYLPQQLALLDSDPEDSEDEQRSAPFYTPPAGTPGHVAYTYKPITFLDVEEGDMCLHTVEKVDPLVDNDRYPSHVASFVLAWTRAFVSEWAGFLYEEDRGTPLEDRPIKSVYGDTDSLFVTQRGHELMETKGKKRIKKHGGKLVFDPDEPDLTWLVECETVCVSCGADAYSPESIFLAPKLYALKCIYCPACHKTSKGKLRAKGHAAEALNYELMVNCYLADMQGADRQRFSTSRMSLKRTLASAQPGAHPFTVTETTLTRTLRPWKDRTLAALDAHRLIPYSRSRPNPRNEEVCWIEMP.

The protein belongs to the DNA polymerase type-B family. Heterodimer with the terminal protein; this heterodimer binds to bp 9 to 18 of the genome. Forms a complex with viral pTP, DBP and hosts NFIA and POU2F1/OCT1 for initiation of replication.

The protein localises to the host nucleus. The enzyme catalyses DNA(n) + a 2'-deoxyribonucleoside 5'-triphosphate = DNA(n+1) + diphosphate. In terms of biological role, eukaryotic-type DNA polymerase involved in viral genomic replication. DNA synthesis is protein primed, and acts in a strand displacement replication. Assembles in complex with viral pTP, DBP, host NFIA and host POU2F1/OCT1 on viral origin of replication. The polymerase covalently transfers dCMP onto pTP, thereby initiating complementary strand synthesis. This Human adenovirus B serotype 7 (HAdV-7) protein is DNA polymerase.